Consider the following 1480-residue polypeptide: Heme-responsive zinc finger transcription factor HAP1 (1480 aa).

Positions methionine 1–serine 50 are enriched in polar residues. The tract at residues methionine 1 to lysine 56 is disordered. Zn(2+)-binding residues include cysteine 64, cysteine 67, cysteine 74, cysteine 81, cysteine 84, and cysteine 93. A DNA-binding region (zn(2)-C6 fungal-type) is located at residues cysteine 64–cysteine 93. Positions glutamate 105–serine 134 form a coiled coil. The segment at lysine 126 to asparagine 208 is disordered. Over residues lysine 130 to serine 142 the composition is skewed to low complexity. Polar residues-rich tracts occupy residues tyrosine 143–phenylalanine 152 and threonine 160–histidine 176. Residues glutamine 177–asparagine 208 show a composition bias toward low complexity. Positions lysine 244–serine 441 are heme-responsive; required for HMC formation. 6 HRM repeats span residues lysine 280 to histidine 285, lysine 296 to histidine 301, lysine 320 to histidine 325, arginine 344 to histidine 349, lysine 386 to histidine 391, and arginine 412 to histidine 417. 2 stretches are compositionally biased toward polar residues: residues serine 429–histidine 444 and glutamine 703–leucine 731. Disordered regions lie at residues serine 429–aspartate 456 and glutamine 703–glutamine 764. Residues asparagine 732–asparagine 756 are compositionally biased toward low complexity. Residues lysine 1189–glutamine 1194 form an HRM 7 repeat. Positions threonine 1381 to serine 1408 are disordered. Residues aspartate 1385–serine 1408 show a composition bias toward polar residues.

As to quaternary structure, binds DNA as a homodimer. Interacts with SRO9 and YDJ1. In the absence of heme, binds to at least four cellular proteins, including YDJ1 and SRO9, forming a high-molecular-weight complex (HMC) which results in repression of its activity and dictates its DNA-binding specificity.

It is found in the nucleus. Regulation of oxygen dependent gene expression. It modulates the expression of Iso-1 (CYP1) and Iso-2 (CYP3) cytochrome c. In response to heme, promotes transcription of genes encoding functions required for respiration, controlling oxidative damage and repression of anaerobic genes. Binds to the sequence 5'-CGGNNNTNNCGG-3'. Is non-functional in terms of iso-1 cytochrome c expression in strain S288c and its derivatives. In Saccharomyces cerevisiae (strain Kyokai no. 7 / NBRC 101557) (Baker's yeast), this protein is Heme-responsive zinc finger transcription factor HAP1 (HAP1).